The primary structure comprises 26 residues: Muscarinic toxin-like protein 1 (26 aa).

It belongs to the three-finger toxin family. Short-chain subfamily. Orphan group VIII (haditoxin) sub-subfamily. As to quaternary structure, homodimer; non-covalently linked. Expressed by the venom gland.

Its subcellular location is the secreted. Antagonist of muscle and neuronal nicotinic acetylcholine receptors (nAChR) with highest affinity for neuronal alpha-7/CHRNA7 nAChRs. The polypeptide is Muscarinic toxin-like protein 1 (Naja naja (Indian cobra)).